Here is a 210-residue protein sequence, read N- to C-terminus: Amelogenin, X isoform (210 aa).

The signal sequence occupies residues 1–16 (MGTWILFACLLGAAFA). The residue at position 32 (Ser-32) is a Phosphoserine. 2 stretches are compositionally biased toward low complexity: residues 109–119 (VAPQQPMMPVP) and 136–169 (PSAQQPFQQPFQPQAIPPQSHQPMQPQSPLHPMQ). Residues 109-187 (VAPQQPMMPV…PPLFSMQPLS (79 aa)) are disordered. Pro residues predominate over residues 170–179 (PLAPQPPLPP).

Belongs to the amelogenin family. In terms of assembly, interacts with KRT5. In terms of processing, several forms are produced by C-terminal processing. Post-translationally, phosphorylated by FAM20C in vitro.

The protein resides in the secreted. Its subcellular location is the extracellular space. It is found in the extracellular matrix. Functionally, plays a role in the biomineralization of teeth. Seems to regulate the formation of crystallites during the secretory stage of tooth enamel development. Thought to play a major role in the structural organization and mineralization of developing enamel. The protein is Amelogenin, X isoform (Amelx) of Mus musculus (Mouse).